Consider the following 947-residue polypeptide: Protein translocase subunit SecA (947 aa).

ATP contacts are provided by residues Gln-87, 105 to 109, and Asp-525; that span reads GEGKT. Residues 905 to 928 form a disordered region; the sequence is PADNADKTARNPNDPSTWGKVGRN. Zn(2+) contacts are provided by Cys-931, Cys-933, Cys-942, and His-943.

It belongs to the SecA family. Monomer and homodimer. Part of the essential Sec protein translocation apparatus which comprises SecA, SecYEG and auxiliary proteins SecDF-YajC and YidC. It depends on Zn(2+) as a cofactor.

It is found in the cell inner membrane. The protein resides in the cytoplasm. The catalysed reaction is ATP + H2O + cellular proteinSide 1 = ADP + phosphate + cellular proteinSide 2.. In terms of biological role, part of the Sec protein translocase complex. Interacts with the SecYEG preprotein conducting channel. Has a central role in coupling the hydrolysis of ATP to the transfer of proteins into and across the cell membrane, serving both as a receptor for the preprotein-SecB complex and as an ATP-driven molecular motor driving the stepwise translocation of polypeptide chains across the membrane. This chain is Protein translocase subunit SecA, found in Rhodopseudomonas palustris (strain BisB18).